Consider the following 1148-residue polypeptide: Protocadherin-19 (1148 aa).

A signal peptide spans Met-1 to Ala-21. 6 Cadherin domains span residues Leu-22–Phe-129, Pro-130–Phe-238, Ser-239–Ile-346, Ser-350–Phe-453, Ser-454–Ile-563, and Ile-569–Met-672. Topologically, residues Leu-22–Ser-678 are extracellular. Ca(2+)-binding residues include Glu-31, Glu-32, Asp-88, and Asp-90. A disulfide bridge links Cys-93 with Cys-99. Ca(2+) is bound by residues Asp-121, Asn-123, Asp-124, Asn-125, Glu-140, Asp-155, Asp-157, Glu-199, Asp-212, Asp-230, Ser-231, Asn-232, Asp-233, Asn-234, and Glu-249. N-linked (GlcNAc...) asparagine glycosylation occurs at Asn-261. Positions 264, 266, 270, 305, 307, 338, 340, 341, 342, 360, 375, 377, 381, 412, and 414 each coordinate Ca(2+). Residue Asn-420 is glycosylated (N-linked (GlcNAc...) asparagine). Ca(2+) is bound by residues Asp-427, Asp-445, Glu-446, Asn-447, Asp-448, Asn-449, Glu-464, Asp-479, Asp-481, Asn-485, Asn-522, Glu-524, and Asp-537. The N-linked (GlcNAc...) asparagine glycan is linked to Asn-485. N-linked (GlcNAc...) asparagine glycosylation occurs at Asn-546. Residues Asp-555, Val-556, Asn-557, Asp-558, and Asn-559 each contribute to the Ca(2+) site. N-linked (GlcNAc...) asparagine glycosylation occurs at Asn-570. Ca(2+)-binding residues include Asp-594, Asp-596, Asn-600, and Asp-646. Residue Asn-676 is glycosylated (N-linked (GlcNAc...) asparagine). A helical membrane pass occupies residues Leu-679–Val-699. Over Ala-700–Leu-1148 the chain is Cytoplasmic. Disordered stretches follow at residues Gly-901 to Val-921 and Asn-1100 to Leu-1148. Composition is skewed to basic and acidic residues over residues Asp-906–Val-921, Ser-1109–His-1123, and Lys-1130–Leu-1148.

Homodimer; antiparallel. As to expression, moderately expressed in all regions of the brain examined, with lowest levels found in the cerebellum. Moderate expression is also found in ovary, and low expression in all other tissues tested. Also detected in primary skin fibroblast.

It localises to the cell membrane. In terms of biological role, calcium-dependent cell-adhesion protein. The protein is Protocadherin-19 (PCDH19) of Homo sapiens (Human).